Reading from the N-terminus, the 456-residue chain is Serine/threonine-protein kinase meng-po (456 aa).

The disordered stretch occupies residues 15–78 (RSFGDGGSTN…RSSIYKKPDK (64 aa)). Residues 22–55 (STNSRNSNNNSSTCTNHNNQKRCSTPLTPTSTST) show a composition bias toward low complexity. Positions 101–367 (YNIEKTLAEG…VAKYMKDRWV (267 aa)) constitute a Protein kinase domain. ATP contacts are provided by residues 107-115 (LAEGCFAKI) and lysine 130. Aspartate 221 acts as the Proton acceptor in catalysis. At serine 334 the chain carries Phosphoserine; by PKA.

This sequence belongs to the protein kinase superfamily. Ser/Thr protein kinase family. Requires Mg(2+) as cofactor. As to expression, expressed in the mushroom bodies (at protein level).

The enzyme catalyses L-seryl-[protein] + ATP = O-phospho-L-seryl-[protein] + ADP + H(+). The catalysed reaction is L-threonyl-[protein] + ATP = O-phospho-L-threonyl-[protein] + ADP + H(+). Activated by Pka-C1-mediated phosphorylation of Ser-334. Functionally, serine/threonine-protein kinase involved in memory formation. Together with the cAMP-dependent protein kinase A Pka-C1, promotes long-term memory (LTM) by regulating CrebB stability and activity. Involved in the maintenance of anesthesia-sensitive memory (ASM) which includes short-term memory (STM) and middle-term memory (MTM). The protein is Serine/threonine-protein kinase meng-po of Drosophila melanogaster (Fruit fly).